The primary structure comprises 600 residues: DNA mismatch repair protein MutL (600 aa).

Belongs to the DNA mismatch repair MutL/HexB family.

Functionally, this protein is involved in the repair of mismatches in DNA. It is required for dam-dependent methyl-directed DNA mismatch repair. May act as a 'molecular matchmaker', a protein that promotes the formation of a stable complex between two or more DNA-binding proteins in an ATP-dependent manner without itself being part of a final effector complex. The polypeptide is DNA mismatch repair protein MutL (Rickettsia typhi (strain ATCC VR-144 / Wilmington)).